Here is a 310-residue protein sequence, read N- to C-terminus: L-lactate dehydrogenase (310 aa).

NAD(+) contacts are provided by residues V17, D38, K43, Y69, and 83-84 (GA). Q86 and R92 together coordinate substrate. NAD(+) is bound by residues S105, 122 to 124 (ATN), and S147. Position 124-127 (124-127 (NPVD)) interacts with substrate. 152-155 (DTAR) serves as a coordination point for substrate. Beta-D-fructose 1,6-bisphosphate contacts are provided by R157 and H172. The active-site Proton acceptor is the H179. Residue Y218 is modified to Phosphotyrosine. A substrate-binding site is contributed by T227.

Belongs to the LDH/MDH superfamily. LDH family. As to quaternary structure, homotetramer.

The protein localises to the cytoplasm. It carries out the reaction (S)-lactate + NAD(+) = pyruvate + NADH + H(+). Its pathway is fermentation; pyruvate fermentation to lactate; (S)-lactate from pyruvate: step 1/1. Allosterically activated by fructose 1,6-bisphosphate (FBP). Functionally, catalyzes the conversion of lactate to pyruvate. This is L-lactate dehydrogenase from Halalkalibacterium halodurans (strain ATCC BAA-125 / DSM 18197 / FERM 7344 / JCM 9153 / C-125) (Bacillus halodurans).